The chain runs to 589 residues: MELNTMGKNHYKWSNKQLREHVEVLDGKRSTHILLKNATYLNSYMREWMTANIWIYNDRIVYVGEQLPEQLTECEVVDCEGKYVVPGYIEPHAHPYQLYNPETLANHAMQFGTTTFINDNLTLFFTLKREEAFRLLDEFNKIPASMYWWCRFDGQTELQNGESLFNSEEIIEWLQHEAVLQGGELTAWPKLLHGDDEMLTWVQETKRLQKKVEGHFPGASETTLAKLKLLGTDCDHEAMTGQEAFTRLMQGYTVSLRNSSIRPDLEVILKELLELGVKQFDRFFFTTDGSHPSFYENGMTNVMISTAIKQGVPVIDAYDMASYNIARYYNMEHVHGSIATGRIANINILESKENPVPISVLAKGKWVKRDGVNTHEALHIDWSKHKVTPLSLDWSIEKEDMIFSNKTGIHLLNNVITKPYTSEINIDCDELSTDHDECFFMMIARDGSWQVNIAVKGFAKELGGLASSYSGTGDIILIGKRKEDMLTAFRRVKELGGGMVIAEKNEVLHEIALPLLGIMSNLKMRELIQEEKQMVKLLQERGYAHDDPAFTILFFSATHLPFIRVTPIGLYDVKSSKVVAPPVNLIKQY.

It belongs to the metallo-dependent hydrolases superfamily. Adenine deaminase family.

It catalyses the reaction adenine + H2O + H(+) = hypoxanthine + NH4(+). This Bacillus cereus (strain ATCC 14579 / DSM 31 / CCUG 7414 / JCM 2152 / NBRC 15305 / NCIMB 9373 / NCTC 2599 / NRRL B-3711) protein is Putative adenine deaminase BC_3012.